The sequence spans 85 residues: uncharacterized protein (85 aa).

Positions 1–19 (MKTIFTVGAVVLATCLLSG) are cleaved as a signal peptide. The N-palmitoyl cysteine moiety is linked to residue C20. C20 is lipidated: S-diacylglycerol cysteine.

The protein resides in the cell outer membrane. This is an uncharacterized protein from Escherichia coli (strain K12).